The following is a 392-amino-acid chain: DNA replication and repair protein RecF (392 aa).

30–37 is an ATP binding site; sequence GPNAAGKT.

Belongs to the RecF family.

It localises to the cytoplasm. Functionally, the RecF protein is involved in DNA metabolism; it is required for DNA replication and normal SOS inducibility. RecF binds preferentially to single-stranded, linear DNA. It also seems to bind ATP. The polypeptide is DNA replication and repair protein RecF (Chloroflexus aurantiacus (strain ATCC 29364 / DSM 637 / Y-400-fl)).